The chain runs to 288 residues: Ribosomal RNA small subunit methyltransferase A (288 aa).

6 residues coordinate S-adenosyl-L-methionine: N18, L20, G45, E66, D91, and N118.

This sequence belongs to the class I-like SAM-binding methyltransferase superfamily. rRNA adenine N(6)-methyltransferase family. RsmA subfamily.

The protein resides in the cytoplasm. It catalyses the reaction adenosine(1518)/adenosine(1519) in 16S rRNA + 4 S-adenosyl-L-methionine = N(6)-dimethyladenosine(1518)/N(6)-dimethyladenosine(1519) in 16S rRNA + 4 S-adenosyl-L-homocysteine + 4 H(+). Specifically dimethylates two adjacent adenosines (A1518 and A1519) in the loop of a conserved hairpin near the 3'-end of 16S rRNA in the 30S particle. May play a critical role in biogenesis of 30S subunits. The sequence is that of Ribosomal RNA small subunit methyltransferase A from Pasteurella multocida (strain Pm70).